Consider the following 412-residue polypeptide: Serine hydroxymethyltransferase (412 aa).

(6S)-5,6,7,8-tetrahydrofolate-binding positions include Leu117 and 121 to 123; that span reads GHL. N6-(pyridoxal phosphate)lysine is present on Lys226. 349 to 351 is a binding site for (6S)-5,6,7,8-tetrahydrofolate; it reads SPF.

This sequence belongs to the SHMT family. Homodimer. Requires pyridoxal 5'-phosphate as cofactor.

Its subcellular location is the cytoplasm. It catalyses the reaction (6R)-5,10-methylene-5,6,7,8-tetrahydrofolate + glycine + H2O = (6S)-5,6,7,8-tetrahydrofolate + L-serine. The protein operates within one-carbon metabolism; tetrahydrofolate interconversion. It functions in the pathway amino-acid biosynthesis; glycine biosynthesis; glycine from L-serine: step 1/1. Functionally, catalyzes the reversible interconversion of serine and glycine with tetrahydrofolate (THF) serving as the one-carbon carrier. This reaction serves as the major source of one-carbon groups required for the biosynthesis of purines, thymidylate, methionine, and other important biomolecules. Also exhibits THF-independent aldolase activity toward beta-hydroxyamino acids, producing glycine and aldehydes, via a retro-aldol mechanism. This chain is Serine hydroxymethyltransferase, found in Nitratidesulfovibrio vulgaris (strain ATCC 29579 / DSM 644 / CCUG 34227 / NCIMB 8303 / VKM B-1760 / Hildenborough) (Desulfovibrio vulgaris).